Consider the following 1300-residue polypeptide: MSRRKQAKPQHLKSDEELLPPDGAPEHAAPGEGAEDADSGPESRSGGEETSVCEKCCAEFFKWADFLEHQRSCTKLPPVLIVHEDAPAPPPEDFPEPSPASSPSERAESEAAEEAGAEGAEGEARPVEKEAEPMDAEPAGDTRAPRPPPAAPAPPTPAYGAPSTNVTLEALLSTKVAVAQFSQGARAAGGSGAGGGVAAAAVPLILEQLMALQQQQIHQLQLIEQIRSQVALMQRPPPRPSLSPAAAPSAPGPAPSQLPGLAALPLSAGAPAAAIAGSGPAAPAAFEGAQPLSRPESGASTPGGPAEPSAPAAPSAAPAPAAPAPAPAPQSAASSQPQSASTPPALAPGSLLGAAPGLPSPLLPQTSASGVIFPNPLVSIAATANALDPLSALMKHRKGKPPNVSVFEPKASAEDPFFKHKCRFCAKVFGSDSALQIHLRSHTGERPFKCNICGNRFSTKGNLKVHFQRHKEKYPHIQMNPYPVPEYLDNVPTCSGIPYGMSLPPEKPVTTWLDSKPVLPTVPTSVGLQLPPTVPGAHGYADSPSATPASRSPQRPSPASSECASLSPGLNHVESGVSATAESPQSLLGGPPLTKAEPVSLPCTNARAGDAPVGAQASAAPTSVDGAPTSLGSPGLPAVSEQFKAQFPFGGLLDSMQTSETSKLQQLVENIDKKMTDPNQCVICHRVLSCQSALKMHYRTHTGERPFKCKICGRAFTTKGNLKTHFGVHRAKPPLRVQHSCPICQKKFTNAVVLQQHIRMHMGGQIPNTPLPEGFQDAMDSELAYDDKNAETLSSYDDDMDENSMEDDAELKDAATDPAKPLLSYAGSCPPSPPSVISSIAALENQMKMIDSVMSCQQLTGLKSVENGSGESDRLSNDSSSAVGDLESRSAGSPALSESSSSQALSPAPSNGESFRSKSPGLGAPEEPQEIPLKTERPDSPAAAPGSGGAPGRAGIKEEAPFSLLFLSRERGKCPSTVCGVCGKPFACKSALEIHYRSHTKERPFVCALCRRGCSTMGNLKQHLLTHRLKELPSQLFDPNFALGPSQSTPSLISSAAPTMIKMEVNGHGKAMALGEGPPLPAGVQVPAGPQTVMGPGLAPMLAPPPRRTPKQHNCQSCGKTFSSASALQIHERTHTGEKPFGCTICGRAFTTKGNLKVHMGTHMWNNAPARRGRRLSVENPMALLGGDALKFSEMFQKDLAARAMNVDPSFWNQYAAAITNGLAMKNNEISVIQNGGIPQLPVSLGGSALPPLGSMASGMDKARTGSSPPIVSLDKASSETAASRPFTRFIEDNKEIGIN.

Residues 1–11 (MSRRKQAKPQH) are compositionally biased toward basic residues. Disordered regions lie at residues 1 to 51 (MSRR…EETS), 84 to 162 (EDAP…YGAP), 234 to 258 (QRPP…PSQL), and 277 to 352 (GSGP…GSLL). The C2H2-type 1; atypical zinc finger occupies 51-73 (SVCEKCCAEFFKWADFLEHQRSC). The span at 87 to 100 (PAPPPEDFPEPSPA) shows a compositional bias: pro residues. Position 109 is a phosphoserine (S109). The segment covering 122 to 132 (GEARPVEKEAE) has biased composition (basic and acidic residues). Pro residues predominate over residues 145-157 (PRPPPAAPAPPTP). Low complexity-rich tracts occupy residues 277 to 319 (GSGP…AAPA) and 329 to 352 (PQSA…GSLL). 2 C2H2-type zinc fingers span residues 420 to 442 (HKCR…LRSH) and 448 to 470 (FKCN…FQRH). Residues 523–633 (PTSVGLQLPP…VDGAPTSLGS (111 aa)) form a disordered region. A compositionally biased stretch (low complexity) spans 543 to 561 (SPSATPASRSPQRPSPASS). Residues 577 to 586 (VSATAESPQS) are compositionally biased toward polar residues. 3 consecutive C2H2-type zinc fingers follow at residues 679–701 (NQCV…YRTH), 707–729 (FKCK…FGVH), and 739–761 (HSCP…IRMH). The disordered stretch occupies residues 864-955 (SVENGSGESD…GSGGAPGRAG (92 aa)). Positions 889 to 910 (RSAGSPALSESSSSQALSPAPS) are enriched in low complexity. A Phosphoserine modification is found at S919. C2H2-type zinc fingers lie at residues 977–999 (TVCG…YRSH), 1005–1027 (FVCA…LLTH), 1113–1135 (HNCQ…ERTH), and 1141–1163 (FGCT…MGTH). Position 1177 is a phosphoserine (S1177). Residues 1259-1279 (GMDKARTGSSPPIVSLDKASS) are disordered.

The protein belongs to the sal C2H2-type zinc-finger protein family. In terms of tissue distribution, widely expressed in adult with highest levels in heart. Expressed in fetal brain (in neurons of hippocampus, cortex, mediodorsal and ventrolateral thalamic nuclei, putamen, cerebellum and brainstem).

Its subcellular location is the nucleus. Its function is as follows. Probable transcription factor. The polypeptide is Sal-like protein 3 (SALL3) (Homo sapiens (Human)).